Reading from the N-terminus, the 93-residue chain is Acyl carrier protein AcpXL (93 aa).

Positions 2 to 88 (SSTFDKVADI…NLCAKIDELV (87 aa)) constitute a Carrier domain. S37 carries the O-(pantetheine 4'-phosphoryl)serine modification.

4'-phosphopantetheine is transferred from CoA to a specific serine of apo-ACP by AcpS. This modification is essential for activity because fatty acids are bound in thioester linkage to the sulfhydryl of the prosthetic group.

The protein localises to the cytoplasm. The protein operates within glycolipid biosynthesis; KDO(2)-lipid A biosynthesis. Carrier of the growing fatty acid chain in fatty acid biosynthesis. Is involved in the transfer of long hydroxylated fatty acids to lipid A. In Brucella melitensis biotype 1 (strain ATCC 23456 / CCUG 17765 / NCTC 10094 / 16M), this protein is Acyl carrier protein AcpXL (acpXL).